The primary structure comprises 289 residues: Acetyl-coenzyme A carboxylase carboxyl transferase subunit beta (289 aa).

In terms of domain architecture, CoA carboxyltransferase N-terminal spans 28–289; the sequence is VMTKCPKCKK…QGGEMAVWQS (262 aa). 4 residues coordinate Zn(2+): cysteine 32, cysteine 35, cysteine 51, and cysteine 54. Residues 32-54 form a C4-type zinc finger; it reads CPKCKKIMYTKELLKNLKVCVNC.

This sequence belongs to the AccD/PCCB family. As to quaternary structure, acetyl-CoA carboxylase is a heterohexamer composed of biotin carboxyl carrier protein (AccB), biotin carboxylase (AccC) and two subunits each of ACCase subunit alpha (AccA) and ACCase subunit beta (AccD). The cofactor is Zn(2+).

The protein resides in the cytoplasm. It catalyses the reaction N(6)-carboxybiotinyl-L-lysyl-[protein] + acetyl-CoA = N(6)-biotinyl-L-lysyl-[protein] + malonyl-CoA. Its pathway is lipid metabolism; malonyl-CoA biosynthesis; malonyl-CoA from acetyl-CoA: step 1/1. Its function is as follows. Component of the acetyl coenzyme A carboxylase (ACC) complex. Biotin carboxylase (BC) catalyzes the carboxylation of biotin on its carrier protein (BCCP) and then the CO(2) group is transferred by the transcarboxylase to acetyl-CoA to form malonyl-CoA. This is Acetyl-coenzyme A carboxylase carboxyl transferase subunit beta from Bacillus cereus (strain AH187).